A 149-amino-acid chain; its full sequence is Large ribosomal subunit protein bL9 (149 aa).

Belongs to the bacterial ribosomal protein bL9 family.

Functionally, binds to the 23S rRNA. The chain is Large ribosomal subunit protein bL9 from Fervidobacterium nodosum (strain ATCC 35602 / DSM 5306 / Rt17-B1).